A 516-amino-acid polypeptide reads, in one-letter code: Probable fucosyltransferase 8 (516 aa).

The chain crosses the membrane as a helical; Signal-anchor for type II membrane protein span at residues 5–25; the sequence is ITVVTCLFLLSVMQLSFFNIF. Residues 26-516 are Lumenal-facing; sequence NYQLLDATTN…ITGLKLVDSN (491 aa). N-linked (GlcNAc...) asparagine glycosylation is found at asparagine 35, asparagine 116, asparagine 211, asparagine 362, and asparagine 463.

It belongs to the glycosyltransferase 37 family. As to expression, expressed in leaves and stems.

It localises to the golgi apparatus. The protein resides in the golgi stack membrane. It participates in protein modification; protein glycosylation. Its function is as follows. May be involved in cell wall biosynthesis. May act as a fucosyltransferase. The protein is Probable fucosyltransferase 8 (FUT8) of Arabidopsis thaliana (Mouse-ear cress).